The primary structure comprises 124 residues: Fluoride-specific ion channel FluC (124 aa).

4 helical membrane passes run 1 to 21 (MAYLLVFVGGGLGAMFRHFIN), 36 to 56 (TFFINVTGSIVMGLIAGYLAF), 66 to 86 (LFLMTGILGGYTTFSAFSLDA), and 94 to 114 (AVGLAVVYVLGSVVLAIAGLF). 2 residues coordinate Na(+): Gly74 and Thr77.

This sequence belongs to the fluoride channel Fluc/FEX (TC 1.A.43) family.

The protein localises to the cell inner membrane. It carries out the reaction fluoride(in) = fluoride(out). Its activity is regulated as follows. Na(+) is not transported, but it plays an essential structural role and its presence is essential for fluoride channel function. Its function is as follows. Fluoride-specific ion channel. Important for reducing fluoride concentration in the cell, thus reducing its toxicity. This is Fluoride-specific ion channel FluC from Rhodopseudomonas palustris (strain ATCC BAA-98 / CGA009).